A 617-amino-acid chain; its full sequence is BPI fold-containing family B member 4 (617 aa).

The N-terminal stretch at 1–17 (MWTAWCVAALSVAAVCG) is a signal peptide. The tract at residues 124–149 (RPSDSAYHRGPGRYRSAADPSSAGRL) is disordered. The N-linked (GlcNAc...) asparagine glycan is linked to Asn-275. The cysteines at positions 297 and 334 are disulfide-linked.

The protein belongs to the BPI/LBP/Plunc superfamily. BPI/LBP family. As to expression, highly expressed in olfactory mucosa but undetectable in thymus, kidney, lung, brain, spleen and liver.

It is found in the secreted. The protein resides in the cytoplasm. In terms of biological role, may have the capacity to recognize and bind specific classes of odorants. May act as a carrier molecule, transporting odorants across the mucus layer to access receptor sites. May serve as a primary defense mechanism by recognizing and removing potentially harmful odorants or pathogenic microorganisms from the mucosa or clearing excess odorant from mucus to enable new odorant stimuli to be received. This Rattus norvegicus (Rat) protein is BPI fold-containing family B member 4 (Bpifb4).